The sequence spans 261 residues: Carnitinyl-CoA dehydratase (261 aa).

E111 functions as the Nucleophile in the catalytic mechanism. The active-site Proton acceptor is the E131.

This sequence belongs to the enoyl-CoA hydratase/isomerase family.

The enzyme catalyses (R)-carnitinyl-CoA = crotonobetainyl-CoA + H2O. It functions in the pathway amine and polyamine metabolism; carnitine metabolism. Its function is as follows. Catalyzes the reversible dehydration of L-carnitinyl-CoA to crotonobetainyl-CoA. The protein is Carnitinyl-CoA dehydratase of Escherichia coli O6:K15:H31 (strain 536 / UPEC).